Consider the following 136-residue polypeptide: Class I hydrophobin 16 (136 aa).

Positions M1–A19 are cleaved as a signal peptide. Intrachain disulfides connect C58–C115, C65–C109, C66–C99, and C116–C129. N74 carries an N-linked (GlcNAc...) asparagine glycan.

It belongs to the fungal hydrophobin family. Self-assembles to form functional amyloid fibrils called rodlets. Self-assembly into fibrillar rodlets occurs spontaneously at hydrophobic:hydrophilic interfaces and the rodlets further associate laterally to form amphipathic monolayers.

The protein localises to the secreted. Its subcellular location is the cell wall. In terms of biological role, aerial growth, conidiation, and dispersal of filamentous fungi in the environment rely upon a capability of their secreting small amphipathic proteins called hydrophobins (HPBs) with low sequence identity. Class I can self-assemble into an outermost layer of rodlet bundles on aerial cell surfaces, conferring cellular hydrophobicity that supports fungal growth, development and dispersal; whereas Class II form highly ordered films at water-air interfaces through intermolecular interactions but contribute nothing to the rodlet structure. Hydph16 is a class I hydrophobin that has specific functions in aerial mycelium formation, cell wall stress protection, and cell wall structure formation, but does not seem to be involved in mycelial hydrophobicity. Specifically functions in resisting cell wall synthesis inhibitors. This is Class I hydrophobin 16 from Pleurotus ostreatus (strain PC15) (Oyster mushroom).